A 467-amino-acid chain; its full sequence is Putative serine/threonine-protein kinase R400 (467 aa).

The 369-residue stretch at glycine 99–valine 467 folds into the Protein kinase domain. ATP is bound by residues isoleucine 105–threonine 113 and lysine 129. The active-site Proton acceptor is the aspartate 272. Residues leucine 443 to valine 467 form a disordered region. Residues serine 458–valine 467 are compositionally biased toward polar residues.

Belongs to the protein kinase superfamily. Ser/Thr protein kinase family.

The protein resides in the virion. The catalysed reaction is L-seryl-[protein] + ATP = O-phospho-L-seryl-[protein] + ADP + H(+). The enzyme catalyses L-threonyl-[protein] + ATP = O-phospho-L-threonyl-[protein] + ADP + H(+). The protein is Putative serine/threonine-protein kinase R400 of Acanthamoeba polyphaga mimivirus (APMV).